We begin with the raw amino-acid sequence, 157 residues long: Peptide methionine sulfoxide reductase MsrA (157 aa).

Residue Cys10 is part of the active site.

This sequence belongs to the MsrA Met sulfoxide reductase family.

It carries out the reaction L-methionyl-[protein] + [thioredoxin]-disulfide + H2O = L-methionyl-(S)-S-oxide-[protein] + [thioredoxin]-dithiol. The catalysed reaction is [thioredoxin]-disulfide + L-methionine + H2O = L-methionine (S)-S-oxide + [thioredoxin]-dithiol. Has an important function as a repair enzyme for proteins that have been inactivated by oxidation. Catalyzes the reversible oxidation-reduction of methionine sulfoxide in proteins to methionine. The sequence is that of Peptide methionine sulfoxide reductase MsrA from Clostridium botulinum (strain Hall / ATCC 3502 / NCTC 13319 / Type A).